Here is a 107-residue protein sequence, read N- to C-terminus: UPF0473 protein LACR_0139 (107 aa).

The protein belongs to the UPF0473 family.

The polypeptide is UPF0473 protein LACR_0139 (Lactococcus lactis subsp. cremoris (strain SK11)).